We begin with the raw amino-acid sequence, 92 residues long: Small ribosomal subunit protein uS19 (92 aa).

It belongs to the universal ribosomal protein uS19 family.

Protein S19 forms a complex with S13 that binds strongly to the 16S ribosomal RNA. This is Small ribosomal subunit protein uS19 from Bifidobacterium longum subsp. infantis (strain ATCC 15697 / DSM 20088 / JCM 1222 / NCTC 11817 / S12).